The sequence spans 237 residues: MTTYFVTGTDTDAGKTLVASGLLALARRRGLTTLGLKPVASGCESTTEGLRNIDALTLQAQSMPTPPYATLNPYAYAPAIAPHLAARRAGRIPTLDALVAHVADPLAEKRDLTLIEGAGGWRVPLNDDEDLAGLAVRLELPVILVVGLELGCLNHARLSAEAIRADGLPLAGWVGNLIDPGLSFDEVADEACYRDNLATLERTLEAPCLGIVPRLAAATPDARAHAAADYLTLPGDA.

12-17 serves as a coordination point for ATP; the sequence is DAGKTL. Residue Thr16 participates in Mg(2+) binding. Lys37 is a catalytic residue. Ser41 is a binding site for substrate. ATP is bound by residues Asp54, 116–119, and 213–215; these read EGAG and PRL. Asp54 and Glu116 together coordinate Mg(2+).

Belongs to the dethiobiotin synthetase family. Homodimer. It depends on Mg(2+) as a cofactor.

It is found in the cytoplasm. The enzyme catalyses (7R,8S)-7,8-diammoniononanoate + CO2 + ATP = (4R,5S)-dethiobiotin + ADP + phosphate + 3 H(+). The protein operates within cofactor biosynthesis; biotin biosynthesis; biotin from 7,8-diaminononanoate: step 1/2. In terms of biological role, catalyzes a mechanistically unusual reaction, the ATP-dependent insertion of CO2 between the N7 and N8 nitrogen atoms of 7,8-diaminopelargonic acid (DAPA, also called 7,8-diammoniononanoate) to form a ureido ring. This Chromohalobacter salexigens (strain ATCC BAA-138 / DSM 3043 / CIP 106854 / NCIMB 13768 / 1H11) protein is ATP-dependent dethiobiotin synthetase BioD.